A 55-amino-acid polypeptide reads, in one-letter code: Large ribosomal subunit protein bL33 (55 aa).

A compositionally biased stretch (basic and acidic residues) spans 1–11 (MAKGGREKIKL). Positions 1 to 27 (MAKGGREKIKLESTAGTGHFYTTSKNK) are disordered. Polar residues predominate over residues 14–24 (TAGTGHFYTTS).

The protein belongs to the bacterial ribosomal protein bL33 family.

The sequence is that of Large ribosomal subunit protein bL33 from Dechloromonas aromatica (strain RCB).